The sequence spans 303 residues: Probable alpha-L-glutamate ligase 1 (303 aa).

The 184-residue stretch at Leu104 to Glu287 folds into the ATP-grasp domain. ATP-binding positions include Lys141, Glu178–Phe179, Asp187, and Arg211–Asn213. Positions 248, 260, and 262 each coordinate Mg(2+). The Mn(2+) site is built by Asp248, Glu260, and Asn262.

This sequence belongs to the RimK family. Requires Mg(2+) as cofactor. Mn(2+) is required as a cofactor.

In Hahella chejuensis (strain KCTC 2396), this protein is Probable alpha-L-glutamate ligase 1.